The sequence spans 95 residues: Integration host factor subunit beta (95 aa).

The protein belongs to the bacterial histone-like protein family. In terms of assembly, heterodimer of an alpha and a beta chain.

Its function is as follows. This protein is one of the two subunits of integration host factor, a specific DNA-binding protein that functions in genetic recombination as well as in transcriptional and translational control. This chain is Integration host factor subunit beta, found in Jannaschia sp. (strain CCS1).